A 102-amino-acid chain; its full sequence is NADH-quinone oxidoreductase subunit K (102 aa).

3 consecutive transmembrane segments (helical) span residues 5 to 25 (LSHY…GIFL), 31 to 51 (IVIL…MVAF), and 65 to 85 (LFIL…LVVF).

The protein belongs to the complex I subunit 4L family. In terms of assembly, NDH-1 is composed of 14 different subunits. Subunits NuoA, H, J, K, L, M, N constitute the membrane sector of the complex.

Its subcellular location is the cell inner membrane. It catalyses the reaction a quinone + NADH + 5 H(+)(in) = a quinol + NAD(+) + 4 H(+)(out). In terms of biological role, NDH-1 shuttles electrons from NADH, via FMN and iron-sulfur (Fe-S) centers, to quinones in the respiratory chain. The immediate electron acceptor for the enzyme in this species is believed to be ubiquinone. Couples the redox reaction to proton translocation (for every two electrons transferred, four hydrogen ions are translocated across the cytoplasmic membrane), and thus conserves the redox energy in a proton gradient. This is NADH-quinone oxidoreductase subunit K from Rhizobium leguminosarum bv. trifolii (strain WSM2304).